The chain runs to 135 residues: Large ribosomal subunit protein uL16m (135 aa).

Belongs to the universal ribosomal protein uL16 family.

The protein localises to the mitochondrion. The chain is Large ribosomal subunit protein uL16m (RPL16) from Marchantia polymorpha (Common liverwort).